The chain runs to 1405 residues: MNHDVMNIFNPAAEGPSFDRIRIALASPEKIHSWSFGEVKKPETINYRTFKPERDGLFCARIFGPVKDYECLCGKYKRIKYKGIVCEKCGVEVTLARVRRERMGHIELAAPVAHIWFLKSLPSRIAMILDMALKDVERVLYFENYVVIEPGLTPLQPFQLLSEEEYMEAQDEYGEDAFTAGIGAEAVREILINMDLEAECAKVREDMKETGSELKLKKYAKRLKLMENFLTSGNRPEWMIMTVIPVIPPELRPLVPLDGGRFATSDLNDLYRRVINRNNRLKRLIELRAPDIIIRNEKRMLQESVDALFDNGRRGRVITGANKRPLKSLSDMLKGKQGRFRQNLLGKRVDYSGRSVIVVGPDLKLHECGLPKKMALELFKPFIYARLDAKGLSGTVKQSKKLVEKERPEVWDVLDEVIREHPVMLNRAPTLHRLGIQAFEPKLIEGKAIQLHPLVCAAFNADFDGDQMAVHVPLSLEAQLEARTLMMSTNNILSPANGKPIIVPSQDIVLGLYYLSIEKDNEPGEGMAFGSRAELEAALESDVITLHTKIKARWEGIDVDGNKITKVIETTPGRKMLVDLLPKHAKMQPEMIGELLTKKAIGALIDQVYRHCGQKATVIFCDQIMGLGFKEAAKAGISFGKDDMLIPDAKADLVGATRDMVSDYEQQYVDGLITKGEKYNKVVDAWAKCTDNVADAMMDEISKTSVGEDGRTSEVNSVYMMAHSGARGSKNQMKQLAGMRGLMAKPSGEIIETPIISNFKEGLTVLEYFNSTHGARKGLADTALKTANSGYLTRRLVDVAQDCIITEEDCGTSEGFEIQAVVDGGDVVVSLEQRILGRTLAAEVKDPASGEVICPADTYVDEDLAMAIEMAGVQSVIARSPLTCETRVGVCATCYGRDLARGTRVNIGEAVGVIAAQSIGEPGTQLTMRTFHIGGTAQVSEQSFIEAGSEGKVTFKNPSTVTNSDGDLIALSRNMQLVIVDTEGKERESYKLGYGTKLKVKEGDKTTRGQRLGEWDPYTAPVVSEVGGKVKFVDIAEGVSVKEETDEATGIASKVVIDWRGSAKANALQPTIVVQDENGEPIKLSSGSTASYMLAVGAILSVADGDTVRPGDIVARIPTEGAKTRDITGGLPRVAELFEARRPKDHAVIAEITGRVEFGRDYKNKRRIAIVPEGDEAEKVEYLVPKGKHLTCQEGDVIQKGEYLLDGHPAPHDILAILGVPALANYLIDEIQEVYRLQGVPINDKHIETIVRQMLQKIEVKDPGESTYLAAEQVDKIEFIETNERLEAEGKRMATGDPVLLGITKASLQTRSFISAASFQETTRVLTEAAVQGKEDTLEGLKENVIVGRLIPAGTGAIMRQYQVIADDLDADMLAEREAAVEAEGLPTEIAEAAAEEMAAEEGAS.

Zn(2+)-binding residues include Cys-71, Cys-73, Cys-86, and Cys-89. Residues Asp-462, Asp-464, and Asp-466 each coordinate Mg(2+). Zn(2+) contacts are provided by Cys-810, Cys-884, Cys-891, and Cys-894.

This sequence belongs to the RNA polymerase beta' chain family. In terms of assembly, the RNAP catalytic core consists of 2 alpha, 1 beta, 1 beta' and 1 omega subunit. When a sigma factor is associated with the core the holoenzyme is formed, which can initiate transcription. Mg(2+) serves as cofactor. It depends on Zn(2+) as a cofactor.

The enzyme catalyses RNA(n) + a ribonucleoside 5'-triphosphate = RNA(n+1) + diphosphate. In terms of biological role, DNA-dependent RNA polymerase catalyzes the transcription of DNA into RNA using the four ribonucleoside triphosphates as substrates. The chain is DNA-directed RNA polymerase subunit beta' from Maricaulis maris (strain MCS10) (Caulobacter maris).